The following is a 454-amino-acid chain: Death-associated protein kinase 3 (454 aa).

Residues 13–275 form the Protein kinase domain; it reads YEMGEELGSG…IAQSLEHSWI (263 aa). ATP-binding positions include 19–27 and K42; that span reads LGSGQFAIV. S50 carries the post-translational modification Phosphoserine; by autocatalysis. Pyridone 6 contacts are provided by E94 and V96. D139 acts as the Proton acceptor in catalysis. The tract at residues 161–204 is activation segment; it reads DFGIAHKIEAGNEFKNIFGTPEFVAPEIVNYEPLGLEADMWSIG. Phosphothreonine is present on residues T180 and T225. Position 265 is a phosphothreonine; by autocatalysis and ROCK1 (T265). At T299 the chain carries Phosphothreonine; by autocatalysis, DAPK1 and ROCK1. Position 306 is a phosphothreonine; by autocatalysis (T306). S309 is modified (phosphoserine; by DAPK1). The residue at position 311 (S311) is a Phosphoserine; by autocatalysis and DAPK1. A phosphoserine; by DAPK1 mark is found at S312, S318, and S326. The interval 427–441 is leucine-zipper; that stretch reads VASEMRFVQDLVRAL.

The protein belongs to the protein kinase superfamily. CAMK Ser/Thr protein kinase family. DAP kinase subfamily. As to quaternary structure, homooligomer in its kinase-active form (homotrimers and homodimers are reported); monomeric in its kinase-inactive form. Homodimerization is required for activation segment autophosphorylation. Isoform 1 and isoform 2 interact with myosin and PPP1R12A; interaction of isoform 1 with PPP1R12A is inhibited by RhoA dominant negative form. Interacts with NLK, DAXX, STAT3, RHOD (GTP-bound form) and TCP10L. Interacts with PAWR; the interaction is reported conflictingly: according to PubMed:17953487 does not interact with PAWR. Interacts with ULK1; may be a substrate of ULK1. Interacts with LUZP1; the interaction is likely to occur throughout the cell cycle and reduces the LUZP1-mediated suppression of MYL9 phosphorylation. It depends on Mg(2+) as a cofactor. In terms of processing, the phosphorylation status is critical for kinase activity, oligomerization and intracellular localization. Phosphorylation at Thr-180, Thr-225 and Thr-265 is essential for activity. The phosphorylated form is localized in the cytoplasm promoted by phosphorylation at Thr-299; nuclear translocation or retention is maximal when it is not phosphorylated. Phosphorylation increases the trimeric form, and its dephosphorylation favors a kinase-inactive monomeric form. Both isoform 1 and isoform 2 can undergo autophosphorylation. As to expression, widely expressed. Isoform 1 and isoform 2 are expressed in the bladder smooth muscle.

The protein localises to the nucleus. It is found in the PML body. It localises to the cytoplasm. Its subcellular location is the cytoskeleton. The protein resides in the microtubule organizing center. The protein localises to the centrosome. It is found in the chromosome. It localises to the centromere. Its subcellular location is the spindle. The protein resides in the midbody. The catalysed reaction is L-seryl-[protein] + ATP = O-phospho-L-seryl-[protein] + ADP + H(+). The enzyme catalyses L-threonyl-[protein] + ATP = O-phospho-L-threonyl-[protein] + ADP + H(+). With respect to regulation, a sequential activation is proposed: autophosphorylation at consensus sites is leading to dimerization of the catalytic domain stabilized by phosphorylation at Ser-50 and activation segment exchange (producing an active confirmation of both kinase modules in trans) followed by phosphorylation at Thr-180 in the activation segment and at other regulatory sites. Phosphorylation at Thr-180, Thr-225 and Thr-265 is essential for activity. Oligomerization is required for full enzymatic activity. Inhibited by pyridone-6 (K00225), a potent, ATP-competitive inhibitor. Serine/threonine kinase which is involved in the regulation of apoptosis, autophagy, transcription, translation and actin cytoskeleton reorganization. Involved in the regulation of smooth muscle contraction. Regulates both type I (caspase-dependent) apoptotic and type II (caspase-independent) autophagic cell deaths signal, depending on the cellular setting. Involved in regulation of starvation-induced autophagy. Regulates myosin phosphorylation in both smooth muscle and non-muscle cells. In smooth muscle, regulates myosin either directly by phosphorylating MYL12B and MYL9 or through inhibition of smooth muscle myosin phosphatase (SMPP1M) via phosphorylation of PPP1R12A; the inhibition of SMPP1M functions to enhance muscle responsiveness to Ca(2+) and promote a contractile state. Phosphorylates MYL12B in non-muscle cells leading to reorganization of actin cytoskeleton. Isoform 2 can phosphorylate myosin, PPP1R12A and MYL12B. Overexpression leads to condensation of actin stress fibers into thick bundles. Involved in actin filament focal adhesion dynamics. The function in both reorganization of actin cytoskeleton and focal adhesion dissolution is modulated by RhoD. Positively regulates canonical Wnt/beta-catenin signaling through interaction with NLK and TCF7L2. Phosphorylates RPL13A on 'Ser-77' upon interferon-gamma activation which is causing RPL13A release from the ribosome, RPL13A association with the GAIT complex and its subsequent involvement in transcript-selective translation inhibition. Enhances transcription from AR-responsive promoters in a hormone- and kinase-dependent manner. Involved in regulation of cell cycle progression and cell proliferation. May be a tumor suppressor. This chain is Death-associated protein kinase 3 (DAPK3), found in Homo sapiens (Human).